The primary structure comprises 260 residues: Dehydrogenase/reductase SDR family member 4 (260 aa).

18-42 is an NADP(+) binding site; sequence IVTASTDGIGLAIARRLAQDGAHVV. K74 is modified (N6-acetyllysine; alternate). N6-succinyllysine; alternate is present on K74. S151 serves as a coordination point for substrate. Y164 functions as the Proton acceptor in the catalytic mechanism. NADP(+) is bound at residue K168. Residue K198 is modified to N6-acetyllysine; alternate. The residue at position 198 (K198) is an N6-succinyllysine; alternate. S202 carries the post-translational modification Phosphoserine. K209 carries the post-translational modification N6-succinyllysine. The short motif at 258-260 is the Peroxisomal targeting signal element; that stretch reads SRL.

This sequence belongs to the short-chain dehydrogenases/reductases (SDR) family. Homotetramer. As to expression, detected in liver and kidney. Detected at lower levels in heart, lung, spleen, small intestine, testis, brain and stomach.

The protein localises to the peroxisome. The enzyme catalyses a secondary alcohol + NADP(+) = a ketone + NADPH + H(+). It carries out the reaction 3alpha-hydroxy-5beta-pregnan-20-one + NADP(+) = 5beta-pregnan-3,20-dione + NADPH + H(+). It catalyses the reaction 5beta-dihydrotestosterone + NADPH + H(+) = 5beta-androstane-3alpha,17beta-diol + NADP(+). The catalysed reaction is all-trans-retinol + NADP(+) = all-trans-retinal + NADPH + H(+). The enzyme catalyses isatin + NADPH + H(+) = 3-hydroxyindolin-2-one + NADP(+). Inhibited by flavonoids (kaempferol, quercetin, quercitrin, genistein), myristic acid, pyrazole, barbital, phenobarbital and CuSO4. Functionally, NADPH-dependent oxidoreductase which catalyzes the reduction of a variety of compounds bearing carbonyl groups including ketosteroids, alpha-dicarbonyl compounds, aldehydes, aromatic ketones and quinones. Reduces all-trans-retinal and 9-cis retinal. Reduces 3-ketosteroids and benzil into 3alpha-hydroxysteroids and S-benzoin, respectively, in contrast to the stereoselectivity of primates DHRS4s which produce 3beta-hydroxysteroids and R-benzoin. In the reverse reaction, catalyze the NADP-dependent oxidation of 3alpha-hydroxysteroids and alcohol, but with much lower efficiency. Involved in the metabolism of 3alpha-hydroxysteroids, retinoid, isatin and xenobiotic carbonyl compounds. The polypeptide is Dehydrogenase/reductase SDR family member 4 (DHRS4) (Oryctolagus cuniculus (Rabbit)).